The sequence spans 365 residues: Probable dual-specificity RNA methyltransferase RlmN (365 aa).

The Proton acceptor role is filled by Glu-108. Residues 114–347 (HNYGNSVCVT…VTIRREHGHD (234 aa)) enclose the Radical SAM core domain. Cys-121 and Cys-352 are disulfide-bonded. 3 residues coordinate [4Fe-4S] cluster: Cys-128, Cys-132, and Cys-135. Residues 178-179 (GE), Ser-210, 233-235 (SLH), and Asn-309 each bind S-adenosyl-L-methionine. The active-site S-methylcysteine intermediate is the Cys-352.

It belongs to the radical SAM superfamily. RlmN family. The cofactor is [4Fe-4S] cluster.

It is found in the cytoplasm. It carries out the reaction adenosine(2503) in 23S rRNA + 2 reduced [2Fe-2S]-[ferredoxin] + 2 S-adenosyl-L-methionine = 2-methyladenosine(2503) in 23S rRNA + 5'-deoxyadenosine + L-methionine + 2 oxidized [2Fe-2S]-[ferredoxin] + S-adenosyl-L-homocysteine. It catalyses the reaction adenosine(37) in tRNA + 2 reduced [2Fe-2S]-[ferredoxin] + 2 S-adenosyl-L-methionine = 2-methyladenosine(37) in tRNA + 5'-deoxyadenosine + L-methionine + 2 oxidized [2Fe-2S]-[ferredoxin] + S-adenosyl-L-homocysteine. In terms of biological role, specifically methylates position 2 of adenine 2503 in 23S rRNA and position 2 of adenine 37 in tRNAs. The protein is Probable dual-specificity RNA methyltransferase RlmN of Geobacillus kaustophilus (strain HTA426).